A 1048-amino-acid chain; its full sequence is MEKRLGVKPSPASWVLPGYCWQTSVKLPRSLYLLYSFFCFSVLWLSTDADESRCQQGKTLYGAGLRTEGENHLRLLAGSLPFHACRAACCRDSACHALWWLEGMCFQADCSKPQSCQPFRTDSSNSMLIIFQKSQTTDDLGLLPEDDEPHLLRLGWGRTSWRRQSLLGAPLTLSVPSSHHQSLLRDRQKRDLSVVPTHGAMQHSKVNHSEEAGALSPTSAEVRKTITVAGSFTSNHTTQTPEWPKNVSIHPEPSEHSSPVSGTPQVKSTEHSPTDAPLPVAPSYSYATPTPQASSQSTSAPHPVVKELVVSAGKSVQITLPKNEVQLNAFVLPEAEPGETYTYDWQLITHPTDYSGEVERKHSQSLQLSKLTPGLYEFKVTVDGQNAHGEGYVNVTVKPEPRKNRPPVAVVSPQFQEISLPTTSTIIDGSQSTDDDKIVQYHWEELKGPLREEKISEDTAILKLSKLVPGNYTFSLTVVDSDGATNSTTASLTVNKAVDYPPVANAGPNQVITLPQNSITLFGNQSTDDHGITSYEWSLSPSSKGKVVEMQGVRTPALQLSAMQEGDYTYQLTVTDTAGQQATAQVTVIVQPENNKPPQADAGPDKELTLPVDSTTLDGSKSTDDQRVVSYLWEQSRGPDGVQLENANSSVATVTGLQVGTYVFTLTVKDERNLQSQSSVNVIVKEEINKPPVAKIAGNVVVTLPTSTAELDGSRSSDDKGIVSYLWTRDETSPAAGEVLNHSDHHPVLFLSNLVEGTYTFHLKVTDAKGESDTDRTTVEVKPDPRKSNLVEIILDVNVSQLTERLKGMLIRQIGVLLGVLDSDIIVQKIQPYTEQSTKMLFFVQNDPPHQLFKGHEVAAMLKSELQKQKADFLIFRALEISTVTCQLNCSDHGHCDSFTKRCVCDPFWMENFIKVQLRDGDSNCEWSVLYVIIASFVIVVALGILSWTTICCCKRQKGKPKRKSRYKILDATDQESLELKPTSRAGSKQKGPTLSSSLMHSESELDSDDAIFTWPDREKGKLLYGQNGSVPNGQTPLKSRSAREEIL.

Topologically, residues 1-29 are cytoplasmic; sequence MEKRLGVKPSPASWVLPGYCWQTSVKLPR. A helical transmembrane segment spans residues 30-50; it reads SLYLLYSFFCFSVLWLSTDAD. The 79-residue stretch at 49–127 folds into the MANSC domain; it reads ADESRCQQGK…PFRTDSSNSM (79 aa). Residues 51–928 are Extracellular-facing; the sequence is ESRCQQGKTL…RDGDSNCEWS (878 aa). 2 disordered regions span residues 198 to 218 and 231 to 300; these read HGAMQHSKVNHSEEAGALSPT and SFTS…STSA. Residues 231 to 241 show a composition bias toward polar residues; that stretch reads SFTSNHTTQTP. An N-linked (GlcNAc...) asparagine glycan is attached at Asn-246. Composition is skewed to low complexity over residues 247 to 261 and 287 to 300; these read VSIHPEPSEHSSPVS and ATPTPQASSQSTSA. PKD domains are found at residues 309 to 400, 408 to 497, 503 to 593, 599 to 687, and 693 to 784; these read VVSA…VKPE, VAVV…VNKA, VANA…VQPE, QADA…VKEE, and VAKI…VKPD. Asn-394 carries an N-linked (GlcNAc...) asparagine glycan. Residues 593–623 form a disordered region; it reads ENNKPPQADAGPDKELTLPVDSTTLDGSKST. The chain crosses the membrane as a helical span at residues 929-949; the sequence is VLYVIIASFVIVVALGILSWT. Residues 950-1048 are Cytoplasmic-facing; it reads TICCCKRQKG…KSRSAREEIL (99 aa). A Phosphothreonine modification is found at Thr-973. Ser-977 carries the post-translational modification Phosphoserine. Positions 980–1007 are disordered; that stretch reads LKPTSRAGSKQKGPTLSSSLMHSESELD. Over residues 985–994 the composition is skewed to polar residues; sequence RAGSKQKGPT. Phosphoserine occurs at positions 1008 and 1030. Positions 1024-1048 are disordered; that stretch reads LYGQNGSVPNGQTPLKSRSAREEIL. The segment covering 1027–1039 has biased composition (polar residues); it reads QNGSVPNGQTPLK. Thr-1036 is modified (phosphothreonine).

Interacts with RTN4R. Post-translationally, N-glycosylated.

The protein resides in the cytoplasmic granule membrane. It is found in the golgi apparatus membrane. It localises to the golgi apparatus. The protein localises to the trans-Golgi network membrane. Its subcellular location is the cell membrane. In terms of biological role, possible role in axon guidance through interaction with RTN4R. (Microbial infection) Acts as a receptor for adeno-associated virus and is involved in adeno-associated virus infection through endocytosis system. This Mus musculus (Mouse) protein is Dyslexia-associated protein KIAA0319-like protein.